A 382-amino-acid polypeptide reads, in one-letter code: Dual-specificity RNA methyltransferase RlmN (382 aa).

The Proton acceptor role is filled by Glu96. A Radical SAM core domain is found at Gln102–Asp342. Cys109 and Cys345 are disulfide-bonded. Residues Cys116, Cys120, and Cys123 each coordinate [4Fe-4S] cluster. Residues Gly170–Glu171, Ser202, Ser224–His226, and Asn302 contribute to the S-adenosyl-L-methionine site. The S-methylcysteine intermediate role is filled by Cys345.

Belongs to the radical SAM superfamily. RlmN family. Requires [4Fe-4S] cluster as cofactor.

The protein resides in the cytoplasm. It carries out the reaction adenosine(2503) in 23S rRNA + 2 reduced [2Fe-2S]-[ferredoxin] + 2 S-adenosyl-L-methionine = 2-methyladenosine(2503) in 23S rRNA + 5'-deoxyadenosine + L-methionine + 2 oxidized [2Fe-2S]-[ferredoxin] + S-adenosyl-L-homocysteine. The enzyme catalyses adenosine(37) in tRNA + 2 reduced [2Fe-2S]-[ferredoxin] + 2 S-adenosyl-L-methionine = 2-methyladenosine(37) in tRNA + 5'-deoxyadenosine + L-methionine + 2 oxidized [2Fe-2S]-[ferredoxin] + S-adenosyl-L-homocysteine. Its function is as follows. Specifically methylates position 2 of adenine 2503 in 23S rRNA and position 2 of adenine 37 in tRNAs. m2A2503 modification seems to play a crucial role in the proofreading step occurring at the peptidyl transferase center and thus would serve to optimize ribosomal fidelity. The chain is Dual-specificity RNA methyltransferase RlmN from Stutzerimonas stutzeri (strain A1501) (Pseudomonas stutzeri).